Reading from the N-terminus, the 304-residue chain is Nod factor export ATP-binding protein I (304 aa).

One can recognise an ABC transporter domain in the interval 6–236 (IDFRNVEKRY…EIGCDVIEIY (231 aa)). 38–45 (GPNGAGKT) is a binding site for ATP.

The protein belongs to the ABC transporter superfamily. Lipooligosaccharide exporter (TC 3.A.1.102) family. The complex is composed of two ATP-binding proteins (NodI) and two transmembrane proteins (NodJ).

It is found in the cell inner membrane. In terms of biological role, part of the ABC transporter complex NodIJ involved in the export of the nodulation factors (Nod factors), the bacterial signal molecules that induce symbiosis and subsequent nodulation induction. Nod factors are LCO (lipo-chitin oligosaccharide), a modified beta-1,4-linked N-acetylglucosamine oligosaccharide. This subunit is responsible for energy coupling to the transport system. The sequence is that of Nod factor export ATP-binding protein I from Burkholderia orbicola (strain AU 1054).